The following is a 448-amino-acid chain: Tapasin (448 aa).

The first 20 residues, 1–20, serve as a signal peptide directing secretion; it reads MKSLSLLLAVALGLATAVSA. The Lumenal portion of the chain corresponds to 21–414; sequence GPAVIECWFV…LSGPSLEDSV (394 aa). Cysteine 27 and cysteine 91 are oxidised to a cystine. A glycan (N-linked (GlcNAc...) asparagine) is linked at asparagine 253. The Ig-like C1-type domain occupies 292-399; it reads PKVSLMPATL…PASGRSAEVT (108 aa). Residues cysteine 315 and cysteine 382 are joined by a disulfide bond. The chain crosses the membrane as a helical span at residues 415–435; the sequence is GLFLSAFLLLGLFKALGWAAV. The Cytoplasmic portion of the chain corresponds to 436–448; sequence YLSTCKDSKKKAE.

Heterodimer with PDIA3; disulfide-linked. Obligatory mediator for the interaction between newly assembled MHC class I molecules, calreticulin, PDIA3 and TAP. Up to 4 MHC class I/tapasin complexes bind to 1 TAP. Interacts with HLA-G-B2M complex; this interaction is required for loading of high affinity peptides. On its own or as part of MHC class I peptide loading complex, interacts with ligand-free MR1 or MR1-B2M complex, providing for stable MR1 pools ready for metabolite antigen processing. Neutrophils, mostly in fully differentiated cells.

Its subcellular location is the endoplasmic reticulum membrane. Functionally, involved in the association of MHC class I with transporter associated with antigen processing (TAP) and in the assembly of MHC class I with peptide (peptide loading). The polypeptide is Tapasin (Homo sapiens (Human)).